Consider the following 263-residue polypeptide: Tetraspanin-7 (263 aa).

The Cytoplasmic segment spans residues 1-7 (MVQCSNN). The helical transmembrane segment at 8–28 (LLGILNFFTFLLSIPILSAGI) threads the bilayer. At 29-45 (WLGKNAATECERFLDKP) the chain is on the extracellular side. Residues 46-66 (MVVLGIFLMFVSIAGLVGACC) traverse the membrane as a helical segment. Residues 67–75 (RVSCLLWLY) lie on the Cytoplasmic side of the membrane. The helical transmembrane segment at 76–96 (LFAMFLLILLGFCFTIFAFAV) threads the bilayer. At 97–234 (TNRGAGEVIS…NIKNSWKKVA (138 aa)) the chain is on the extracellular side. Asn180 is a glycosylation site (N-linked (GlcNAc...) asparagine). Residues 235 to 255 (KVNIVFLIFLIIVYSVGCCAF) form a helical membrane-spanning segment. At 256–263 (RNNRKRSW) the chain is on the cytoplasmic side.

It belongs to the tetraspanin (TM4SF) family.

The protein localises to the membrane. Functionally, may be involved in the regulation of cell differentiation. The sequence is that of Tetraspanin-7 (TET7) from Arabidopsis thaliana (Mouse-ear cress).